Reading from the N-terminus, the 434-residue chain is Nicotinate phosphoribosyltransferase (434 aa).

Histidine 242 bears the Phosphohistidine; by autocatalysis mark.

The protein belongs to the NAPRTase family. Transiently phosphorylated on a His residue during the reaction cycle. Phosphorylation strongly increases the affinity for substrates and increases the rate of nicotinate D-ribonucleotide production. Dephosphorylation regenerates the low-affinity form of the enzyme, leading to product release.

The catalysed reaction is nicotinate + 5-phospho-alpha-D-ribose 1-diphosphate + ATP + H2O = nicotinate beta-D-ribonucleotide + ADP + phosphate + diphosphate. Its pathway is cofactor biosynthesis; NAD(+) biosynthesis; nicotinate D-ribonucleotide from nicotinate: step 1/1. In terms of biological role, catalyzes the synthesis of beta-nicotinate D-ribonucleotide from nicotinate and 5-phospho-D-ribose 1-phosphate at the expense of ATP. In Bradyrhizobium diazoefficiens (strain JCM 10833 / BCRC 13528 / IAM 13628 / NBRC 14792 / USDA 110), this protein is Nicotinate phosphoribosyltransferase.